The sequence spans 864 residues: Leucine--tRNA ligase (864 aa).

The 'HIGH' region signature appears at 42-52 (PYPSGKLHMGH). The short motif at 624-628 (KMSKS) is the 'KMSKS' region element. Residue Lys627 participates in ATP binding.

It belongs to the class-I aminoacyl-tRNA synthetase family.

It is found in the cytoplasm. The enzyme catalyses tRNA(Leu) + L-leucine + ATP = L-leucyl-tRNA(Leu) + AMP + diphosphate. In Burkholderia multivorans (strain ATCC 17616 / 249), this protein is Leucine--tRNA ligase.